A 333-amino-acid chain; its full sequence is L-lactate dehydrogenase B chain (333 aa).

NAD(+) is bound by residues 29 to 57 and Arg99; that span reads GQVG…WEDK. The substrate site is built by Arg106, Asn138, and Arg169. An NAD(+)-binding site is contributed by Asn138. His193 functions as the Proton acceptor in the catalytic mechanism. Position 248 (Thr248) interacts with substrate.

It belongs to the LDH/MDH superfamily. LDH family. In terms of assembly, homotetramer.

Its subcellular location is the cytoplasm. It carries out the reaction (S)-lactate + NAD(+) = pyruvate + NADH + H(+). The protein operates within fermentation; pyruvate fermentation to lactate; (S)-lactate from pyruvate: step 1/1. Its function is as follows. Interconverts simultaneously and stereospecifically pyruvate and lactate with concomitant interconversion of NADH and NAD(+). This chain is L-lactate dehydrogenase B chain (LDHB), found in Trachemys scripta elegans (Red-eared slider turtle).